The chain runs to 642 residues: Polyglycine hydrolase (642 aa).

An N-terminal signal peptide occupies residues 1–23; it reads MYTSRLLLSNLASCLSLATLVAS. Asparagine 37, asparagine 100, asparagine 159, and asparagine 341 each carry an N-linked (GlcNAc...) asparagine glycan. A disulfide bridge connects residues cysteine 149 and cysteine 183. Serine 370 is an active-site residue. 5 N-linked (GlcNAc...) asparagine glycosylation sites follow: asparagine 390, asparagine 407, asparagine 444, asparagine 487, and asparagine 494.

Belongs to the peptidase S12 family.

It localises to the secreted. The enzyme catalyses a glycyl-glycyl-[protein] + H2O = N-terminal glycyl-[protein] + [protein]-C-terminal glycine. Not inhibited by phenylmethylsulfonyl fluoride (PMSF; serine peptidase class S1 inhibitor), clavulanic acid (beta-lactamase inhibitor) or ampicillin (penicillin-binding protein (PBP) inhibitor). Functionally, serine-type endopeptidase that cleaves Gly-Gly bonds in the polyglycine linker of host plant class IV chitinases to disrupt their chitin-binding, and thereby plays a role in lowering the defense responses of the host to the fungus. Degrades Z.mays Endochitinase A (CHIA). Degrades Z.mays Endochitinase B (CHIB). Has no activity on Z.mays CHIA following CHIA cleavage by fungalysin. The polypeptide is Polyglycine hydrolase (Epicoccum sorghinum (Endophyte fungus)).